Consider the following 137-residue polypeptide: Large ribosomal subunit protein uL16 (137 aa).

Belongs to the universal ribosomal protein uL16 family. As to quaternary structure, part of the 50S ribosomal subunit.

In terms of biological role, binds 23S rRNA and is also seen to make contacts with the A and possibly P site tRNAs. This is Large ribosomal subunit protein uL16 from Ruegeria sp. (strain TM1040) (Silicibacter sp.).